A 389-amino-acid polypeptide reads, in one-letter code: Adenylyltransferase and sulfurtransferase uba4 (389 aa).

ATP contacts are provided by residues Gly40, Asp61, 68-72, Lys85, and 129-130; these read SNLHR and DT. Zn(2+)-binding residues include Cys171 and Cys174. The active-site Glycyl thioester intermediate; for adenylyltransferase activity is Cys188. The Zn(2+) site is built by Cys252 and Cys255. The 90-residue stretch at 298–387 folds into the Rhodanese domain; sequence AQRAPYLVDV…WSRQIDPNFP (90 aa). Residue Cys347 is the Cysteine persulfide intermediate of the active site.

This sequence in the N-terminal section; belongs to the HesA/MoeB/ThiF family. UBA4 subfamily. The cofactor is Zn(2+).

It is found in the cytoplasm. The protein localises to the cytosol. It catalyses the reaction [molybdopterin-synthase sulfur-carrier protein]-C-terminal Gly-Gly + ATP + H(+) = [molybdopterin-synthase sulfur-carrier protein]-C-terminal Gly-Gly-AMP + diphosphate. The catalysed reaction is [molybdopterin-synthase sulfur-carrier protein]-C-terminal Gly-Gly-AMP + S-sulfanyl-L-cysteinyl-[cysteine desulfurase] + AH2 = [molybdopterin-synthase sulfur-carrier protein]-C-terminal-Gly-aminoethanethioate + L-cysteinyl-[cysteine desulfurase] + A + AMP + 2 H(+). It participates in tRNA modification; 5-methoxycarbonylmethyl-2-thiouridine-tRNA biosynthesis. It functions in the pathway cofactor biosynthesis; molybdopterin biosynthesis. Functionally, plays a central role in 2-thiolation of mcm(5)S(2)U at tRNA wobble positions of cytosolic tRNA(Lys), tRNA(Glu) and tRNA(Gln). Also essential during biosynthesis of the molybdenum cofactor. Acts by mediating the C-terminal thiocarboxylation of sulfur carriers URM1 and CNX5/MOCS2A. Its N-terminus first activates urm1 and mocs2a as acyl-adenylates (-COAMP), then the persulfide sulfur on the catalytic cysteine is transferred to URM1 and CNX5/MOCS2A to form thiocarboxylation (-COSH) of their C-terminus. The reaction probably involves hydrogen sulfide that is generated from the persulfide intermediate and that acts as a nucleophile towards URM1 and CNX5/MOCS2A. Subsequently, a transient disulfide bond is formed. Does not use thiosulfate as sulfur donor; NFS1 probably acting as a sulfur donor for thiocarboxylation reactions. Required for growth on nitrate as a sole nitrogen source. The polypeptide is Adenylyltransferase and sulfurtransferase uba4 (Ogataea parapolymorpha (strain ATCC 26012 / BCRC 20466 / JCM 22074 / NRRL Y-7560 / DL-1) (Yeast)).